The following is a 489-amino-acid chain: Acetyl-coenzyme A carboxylase carboxyl transferase subunit beta, chloroplastic (489 aa).

Positions 225–489 (LWIQCDNCYG…FFPLNKNEIK (265 aa)) constitute a CoA carboxyltransferase N-terminal domain. Residues cysteine 229, cysteine 232, cysteine 245, and cysteine 248 each coordinate Zn(2+). The segment at 229–248 (CDNCYGLKYKKVEMNVCEEC) adopts a C4-type zinc-finger fold.

This sequence belongs to the AccD/PCCB family. As to quaternary structure, acetyl-CoA carboxylase is a heterohexamer composed of biotin carboxyl carrier protein, biotin carboxylase and 2 subunits each of ACCase subunit alpha and ACCase plastid-coded subunit beta (accD). Requires Zn(2+) as cofactor.

The protein localises to the plastid. The protein resides in the chloroplast stroma. It catalyses the reaction N(6)-carboxybiotinyl-L-lysyl-[protein] + acetyl-CoA = N(6)-biotinyl-L-lysyl-[protein] + malonyl-CoA. The protein operates within lipid metabolism; malonyl-CoA biosynthesis; malonyl-CoA from acetyl-CoA: step 1/1. In terms of biological role, component of the acetyl coenzyme A carboxylase (ACC) complex. Biotin carboxylase (BC) catalyzes the carboxylation of biotin on its carrier protein (BCCP) and then the CO(2) group is transferred by the transcarboxylase to acetyl-CoA to form malonyl-CoA. The sequence is that of Acetyl-coenzyme A carboxylase carboxyl transferase subunit beta, chloroplastic from Brassica napus (Rape).